The primary structure comprises 361 residues: Septin-2 (361 aa).

A Phosphotyrosine modification is found at tyrosine 17. Positions 34–306 constitute a Septin-type G domain; that stretch reads KGFEFTLMVV…ENFRSERLKR (273 aa). The interval 44 to 51 is G1 motif; the sequence is GESGLGKS. GTP is bound by residues 44–52, threonine 78, glycine 104, and 183–186; these read GESGLGKST and KADT. The interval 101–104 is G3 motif; that stretch reads DTPG. Positions 182–185 are G4 motif; that stretch reads AKAD. Lysine 190 carries the N6-acetyllysine modification. At tyrosine 211 the chain carries Phosphotyrosine. Serine 218 carries the post-translational modification Phosphoserine. Residues glycine 241, arginine 256, and tyrosine 258 each coordinate GTP. The important for dimerization stretch occupies residues 260 to 270; the sequence is WGVVEVENPEH.

It belongs to the TRAFAC class TrmE-Era-EngA-EngB-Septin-like GTPase superfamily. Septin GTPase family. In terms of assembly, septins polymerize into heterooligomeric protein complexes that form filaments, and associate with cellular membranes, actin filaments and microtubules. GTPase activity is required for filament formation. Septin filaments are assembled from asymmetrical heterotrimers, composed of SEPTIN2, SEPTIN6 and SEPTIN7 that associate head-to-head to form a hexameric unit. Interaction between SEPTIN2 and SEPTIN7 seems indirect. Also interacts with SEPTIN9 and SEPTIN5. Interaction with SEPTIN4 not detected. Component of a septin core octameric complex consisting of SEPTIN12, SEPTIN7, SEPTIN6 and SEPTIN2 or SEPTIN4 in the order 12-7-6-2-2-6-7-12 or 12-7-6-4-4-6-7-12 and located in the sperm annulus. Interacts with MAP4. Interacts with DZIP1L. In terms of tissue distribution, widely expressed.

The protein resides in the cytoplasm. It localises to the cytoskeleton. Its subcellular location is the spindle. The protein localises to the chromosome. It is found in the centromere. The protein resides in the kinetochore. It localises to the cleavage furrow. Its subcellular location is the midbody. The protein localises to the cell cortex. It is found in the cell projection. The protein resides in the cilium membrane. It localises to the cilium. Its subcellular location is the flagellum. Functionally, filament-forming cytoskeletal GTPase. Forms a filamentous structure with SEPTIN12, SEPTIN6, SEPTIN2 and probably SEPTIN4 at the sperm annulus which is required for the structural integrity and motility of the sperm tail during postmeiotic differentiation. Required for normal organization of the actin cytoskeleton. Plays a role in the biogenesis of polarized columnar-shaped epithelium by maintaining polyglutamylated microtubules, thus facilitating efficient vesicle transport, and by impeding MAP4 binding to tubulin. Required for the progression through mitosis. Forms a scaffold at the midplane of the mitotic splindle required to maintain CENPE localization at kinetochores and consequently chromosome congression. During anaphase, may be required for chromosome segregation and spindle elongation. Plays a role in ciliogenesis and collective cell movements. In cilia, required for the integrity of the diffusion barrier at the base of the primary cilium that prevents diffusion of transmembrane proteins between the cilia and plasma membranes: probably acts by regulating the assembly of the tectonic-like complex (also named B9 complex) by localizing TMEM231 protein. This chain is Septin-2, found in Mus musculus (Mouse).